A 357-amino-acid polypeptide reads, in one-letter code: Mannonate dehydratase (357 aa).

Belongs to the mannonate dehydratase family. Fe(2+) is required as a cofactor. The cofactor is Mn(2+).

It catalyses the reaction D-mannonate = 2-dehydro-3-deoxy-D-gluconate + H2O. It participates in carbohydrate metabolism; pentose and glucuronate interconversion. Functionally, catalyzes the dehydration of D-mannonate. The chain is Mannonate dehydratase from Enterococcus faecalis (strain ATCC 700802 / V583).